We begin with the raw amino-acid sequence, 285 residues long: Steroidogenic acute regulatory protein, mitochondrial (285 aa).

Residues 1 to 63 constitute a mitochondrion transit peptide; that stretch reads MLLATFKLCA…RRGSLLGSQL (63 aa). Phosphoserine; by PKA occurs at positions 57 and 195. An START domain is found at 67-280; that stretch reads LYSDQELAYI…LRKRLESCPA (214 aa).

May interact with TSPO. In terms of tissue distribution, corpus luteum and adrenal gland.

Its subcellular location is the mitochondrion. It carries out the reaction cholesterol(in) = cholesterol(out). It functions in the pathway steroid metabolism; cholesterol metabolism. In terms of biological role, plays a key role in steroid hormone synthesis by enhancing the metabolism of cholesterol into pregnenolone. Mediates the transfer of cholesterol from the outer mitochondrial membrane to the inner mitochondrial membrane where it is cleaved to pregnenolone. The polypeptide is Steroidogenic acute regulatory protein, mitochondrial (STAR) (Bos taurus (Bovine)).